Here is a 161-residue protein sequence, read N- to C-terminus: MNEVERTLVIIKPDAVVRGLIGEIISRFEKKGLKIVGMKMIWIDRELAEKHYEEHKGKPFFEALIDYITKAPVVVMVVEGRYAVEVVRKMAGATDPKDAAPGTIRGDYGLDIGDAIYNVIHASDSKESAEREISLYFKPEEIYEYCKAADWFYREKKQAKC.

5 residues coordinate ATP: Lys12, Phe60, Arg88, Thr94, and Arg105. His121 serves as the catalytic Pros-phosphohistidine intermediate.

This sequence belongs to the NDK family. Mg(2+) is required as a cofactor.

Its subcellular location is the cytoplasm. The catalysed reaction is a 2'-deoxyribonucleoside 5'-diphosphate + ATP = a 2'-deoxyribonucleoside 5'-triphosphate + ADP. The enzyme catalyses a ribonucleoside 5'-diphosphate + ATP = a ribonucleoside 5'-triphosphate + ADP. Major role in the synthesis of nucleoside triphosphates other than ATP. The ATP gamma phosphate is transferred to the NDP beta phosphate via a ping-pong mechanism, using a phosphorylated active-site intermediate. This Pyrococcus furiosus (strain ATCC 43587 / DSM 3638 / JCM 8422 / Vc1) protein is Nucleoside diphosphate kinase.